A 116-amino-acid polypeptide reads, in one-letter code: Large ribosomal subunit protein uL18 (116 aa).

It belongs to the universal ribosomal protein uL18 family. As to quaternary structure, part of the 50S ribosomal subunit; part of the 5S rRNA/L5/L18/L25 subcomplex. Contacts the 5S and 23S rRNAs.

Its function is as follows. This is one of the proteins that bind and probably mediate the attachment of the 5S RNA into the large ribosomal subunit, where it forms part of the central protuberance. The protein is Large ribosomal subunit protein uL18 of Mycoplasma mycoides subsp. mycoides SC (strain CCUG 32753 / NCTC 10114 / PG1).